The following is a 65-amino-acid chain: Large ribosomal subunit protein bL35 (65 aa).

3 stretches are compositionally biased toward basic residues: residues 1 to 18 (MPKM…KRTA), 31 to 44 (HRFH…RRQL), and 55 to 65 (VKRYKKMIPAK). Positions 1-65 (MPKMKTKSAA…KRYKKMIPAK (65 aa)) are disordered.

This sequence belongs to the bacterial ribosomal protein bL35 family.

The sequence is that of Large ribosomal subunit protein bL35 from Limosilactobacillus fermentum (strain NBRC 3956 / LMG 18251) (Lactobacillus fermentum).